The following is a 216-amino-acid chain: Coiled-coil domain-containing protein 124 (216 aa).

Disordered stretches follow at residues 1–93 (MPKK…PSKV) and 194–216 (LKKEWTKSPENPLNQRAASYNTK). Residues 18 to 90 (RKAEAKAVAD…IKGKQTKEGP (73 aa)) show a composition bias toward basic and acidic residues. Residues 18–119 (RKAEAKAVAD…EIKEKEKSHL (102 aa)) are a coiled coil. Over residues 201-216 (SPENPLNQRAASYNTK) the composition is skewed to polar residues.

The protein belongs to the CCDC124 family. As to quaternary structure, associates with translationally inactive ribosomes in the nonrotated state.

It is found in the cytoplasm. It localises to the cytoskeleton. Its subcellular location is the microtubule organizing center. The protein localises to the centrosome. The protein resides in the midbody. In terms of biological role, ribosome-binding protein involved in ribosome hibernation: associates with translationally inactive ribosomes and stabilizes the nonrotated conformation of the 80S ribosome, thereby promoting ribosome preservation and storage. The protein is Coiled-coil domain-containing protein 124 (ccdc124) of Danio rerio (Zebrafish).